Consider the following 190-residue polypeptide: B3 domain-containing protein At4g01580 (190 aa).

The interval 1 to 25 is disordered; sequence MVITRNMKARATSVSHRQSQQDPES. The span at 12-23 shows a compositional bias: polar residues; it reads TSVSHRQSQQDP. The segment at residues 29 to 122 is a DNA-binding region (TF-B3); that stretch reads KFFKLVLPST…SFRVIIFNAS (94 aa).

It is found in the nucleus. The sequence is that of B3 domain-containing protein At4g01580 from Arabidopsis thaliana (Mouse-ear cress).